A 189-amino-acid chain; its full sequence is GTPase KRas (189 aa).

Met-1 carries the post-translational modification N-acetylmethionine; in GTPase KRas; alternate. An N-acetylthreonine; in GTPase KRas, N-terminally processed modification is found at Thr-2. GTP contacts are provided by residues 10–18 (GAGGVGKSA), 29–35 (VDEYDPT), and 59–60 (AG). An Effector region motif is present at residues 32–40 (YDPTIEDSY). A (Microbial infection) O-linked (Glc) threonine; by P.sordellii toxin TcsL glycan is attached at Thr-35. Lys-104 is modified (N6-acetyllysine). GTP is bound at residue 116–119 (NKCD). The tract at residues 166–185 (YRLKKISKEEKTPGCVKIKK) is hypervariable region. A Glycyl lysine isopeptide (Lys-Gly) (interchain with G-Cter in ubiquitin) cross-link involves residue Lys-170. Cys-180 carries S-palmitoyl cysteine lipidation. N6-palmitoyl lysine attachment occurs at residues Lys-182, Lys-184, and Lys-185. The residue at position 186 (Cys-186) is a Cysteine methyl ester. Cys-186 carries the S-farnesyl cysteine lipid modification. Positions 187 to 189 (IIM) are cleaved as a propeptide — removed in mature form.

The protein belongs to the small GTPase superfamily. Ras family. As to quaternary structure, interacts with PHLPP. Interacts (active GTP-bound form preferentially) with RGS14. Interacts (when farnesylated) with PDE6D; this promotes dissociation from the cell membrane. Interacts with SOS1. Interacts (when farnesylated) with GPR31. Interacts with RAP1GDS1. Interacts (active GTP-bound form) with both SHOC2 and PP1c (all isoforms) to form a tertiary complex; SHOC2 and PP1c preferably bind M-Ras/MRAS, but they also bind K-Ras/KRAS, N-Ras/NRAS and H-Ras/HRAS. Interacts (GTP-bound form) with MAPKAP1/SIN1; inhibiting K-Ras/KRAS activity. In terms of assembly, interacts with GPR31; in a farnelysation-dependent manner. In terms of processing, acetylation at Lys-104 prevents interaction with guanine nucleotide exchange factors (GEFs). Post-translationally, palmitoylated at Lys-182, Lys-184 and Lys-185. Palmitoylation on lysine residues is promoted by palmitoylation at Cys-180. Lysine-depalmitoylation by SIRT2 promotes its localization to endomembranes in endocytic pathways. Ubiquitinated by the BCR(LZTR1) E3 ubiquitin ligase complex at Lys-170 in a non-degradative manner, leading to inhibit Ras signaling by decreasing Ras association with membranes. In terms of processing, (Microbial infection) Glucosylated at Thr-35 by P.sordellii toxin TcsL.

It is found in the cell membrane. It localises to the endomembrane system. The protein localises to the cytoplasm. Its subcellular location is the cytosol. The catalysed reaction is GTP + H2O = GDP + phosphate + H(+). Its activity is regulated as follows. Alternates between an inactive form bound to GDP and an active form bound to GTP. Activated by a guanine nucleotide-exchange factor (GEF) and inactivated by a GTPase-activating protein (GAP). Interaction with SOS1 promotes exchange of bound GDP to GTP. Functionally, ras proteins bind GDP/GTP and possess intrinsic GTPase activity. Plays an important role in the regulation of cell proliferation. Plays a role in promoting oncogenic events by inducing transcriptional silencing of tumor suppressor genes (TSGs) in colorectal cancer (CRC) cells in a ZNF304-dependent manner. The sequence is that of GTPase KRas (KRAS) from Homo sapiens (Human).